Here is a 948-residue protein sequence, read N- to C-terminus: Non-lysosomal glucosylceramidase (948 aa).

The Extracellular portion of the chain corresponds to 1-736; it reads MAEPLAVETK…VMDGPSAYCS (736 aa). The span at 177-195 shows a compositional bias: basic and acidic residues; that stretch reads STRDKTSDPDGDPDGERTK. The segment at 177 to 197 is disordered; it reads STRDKTSDPDGDPDGERTKCQ. N200 is a glycosylation site (N-linked (GlcNAc...) asparagine). A Phosphoserine modification is found at S214. N-linked (GlcNAc...) asparagine glycans are attached at residues N288, N555, and N629. S667 and S669 each carry phosphoserine. N673 carries N-linked (GlcNAc...) asparagine glycosylation. The helical transmembrane segment at 737-753 threads the bilayer; sequence GLWLAALQAMSAMATIL. Residues 754–948 lie on the Cytoplasmic side of the membrane; it reads DQPNDCLRYQ…ALERRRAQRD (195 aa).

The protein belongs to the non-lysosomal glucosylceramidase family.

Its subcellular location is the cell membrane. It carries out the reaction a beta-D-glucosyl-(1&lt;-&gt;1')-N-acylsphing-4-enine + H2O = an N-acylsphing-4-enine + D-glucose. Functionally, non-lysosomal glucosylceramidase that catalyzes the conversion of glucosylceramide to free glucose and ceramide. The protein is Non-lysosomal glucosylceramidase of Drosophila melanogaster (Fruit fly).